A 424-amino-acid chain; its full sequence is STAM-binding protein (424 aa).

The tract at residues 1 to 127 is interaction with CHMP3; it reads MSDHADVSLP…YEQYKERKKK (127 aa). A phosphoserine mark is found at Ser2 and Ser48. The interaction with STAM stretch occupies residues 227–231; that stretch reads PAKPP. Position 243 is a phosphoserine (Ser243). The 132-residue stretch at 257–388 folds into the MPN domain; the sequence is IVVPRNLCSE…LTDYGLQEIS (132 aa). Zn(2+)-binding residues include His335, His337, Asp348, His350, Cys390, His396, and His398. Residues 335–348 carry the JAMM motif motif; it reads HTHPTQTAFLSSVD.

Belongs to the peptidase M67C family. In terms of assembly, interacts with STAM. Interacts with SMAD6 and SMAD7. Interacts with CHMP3; the interaction appears to relieve the autoinhibition of CHMP3. Interacts with SMURF2 and RNF11; this interaction promotes ubiquitination. It depends on Zn(2+) as a cofactor. In terms of processing, phosphorylated after BMP type I receptor activation. Post-translationally, ubiquitinated by SMURF2 in the presence of RNF11.

The protein localises to the nucleus. The protein resides in the membrane. Its subcellular location is the cytoplasm. It localises to the early endosome. With respect to regulation, inhibited by N-ethylmaleimide. In terms of biological role, zinc metalloprotease that specifically cleaves 'Lys-63'-linked polyubiquitin chains. Does not cleave 'Lys-48'-linked polyubiquitin chains. Plays a role in signal transduction for cell growth and MYC induction mediated by IL-2 and GM-CSF. Potentiates BMP (bone morphogenetic protein) signaling by antagonizing the inhibitory action of SMAD6 and SMAD7. Has a key role in regulation of cell surface receptor-mediated endocytosis and ubiquitin-dependent sorting of receptors to lysosomes. Endosomal localization of STAMBP is required for efficient EGFR degradation but not for its internalization. Involved in the negative regulation of PI3K-AKT-mTOR and RAS-MAP signaling pathways. In Rattus norvegicus (Rat), this protein is STAM-binding protein (Stambp).